Here is a 255-residue protein sequence, read N- to C-terminus: Hemin import ATP-binding protein HmuV (255 aa).

In terms of domain architecture, ABC transporter spans 2–238 (LRAHNLHIRR…ESLKAVFGLE (237 aa)). Residue 34–41 (GPNGAGKS) participates in ATP binding.

Belongs to the ABC transporter superfamily. Heme (hemin) importer (TC 3.A.1.14.5) family. The complex is composed of two ATP-binding proteins (HmuV), two transmembrane proteins (HmuU) and a solute-binding protein (HmuT).

It localises to the cell inner membrane. Its function is as follows. Part of the ABC transporter complex HmuTUV involved in hemin import. Responsible for energy coupling to the transport system. The chain is Hemin import ATP-binding protein HmuV from Pseudomonas fluorescens (strain Pf0-1).